A 120-amino-acid polypeptide reads, in one-letter code: Small ribosomal subunit protein bS16 (120 aa).

The disordered stretch occupies residues 81–120 (GLAKRPARNNPQKAEPGEKSKERAAKRAEKAAAPAEDAAA). Residues 95–110 (EPGEKSKERAAKRAEK) are compositionally biased toward basic and acidic residues. A compositionally biased stretch (low complexity) spans 111-120 (AAAPAEDAAA).

Belongs to the bacterial ribosomal protein bS16 family.

This is Small ribosomal subunit protein bS16 from Methylorubrum populi (strain ATCC BAA-705 / NCIMB 13946 / BJ001) (Methylobacterium populi).